The primary structure comprises 308 residues: MTLNGGSGASGSRGAGGRERDRRRGSTPWGPAPPLHRRSMPVDERDLQAALAPGSLATTAAGTRTQGQRLDWPEGSSDSLSSGGSGSEEGVYKVLLLGAPGVGKSALARIFGGIEDGPEAEAAGHTYDRSITVDGEEASLLVYDIWEEDGGCWLPGHCMAMGDAYVIVYSITDKGSFEKASELRVQLRRARQTDDVPIILVGNKSDLVRSREVSVDEGRACAVVFDCKFIETSAALHHNVQALFEGVVRQIRLRRDSKEDNARRQAGTRRRESLGKKAKRFLGRIVARNSRKMAFRAKSKSCHDLSVL.

Over residues 1-15 the composition is skewed to gly residues; it reads MTLNGGSGASGSRGA. Residues 1–86 are disordered; that stretch reads MTLNGGSGAS…SDSLSSGGSG (86 aa). R24 carries the omega-N-methylarginine modification. S26 carries the post-translational modification Phosphoserine. Residues 57-82 show a composition bias toward low complexity; sequence ATTAAGTRTQGQRLDWPEGSSDSLSS. GTP is bound by residues 98–105 and 203–206; these read GAPGVGKS and NKSD. The tract at residues 278-297 is calmodulin-binding; that stretch reads AKRFLGRIVARNSRKMAFRA.

Belongs to the small GTPase superfamily. RGK family. In terms of assembly, interacts with Calmodulin preferentially in the inactive, GDP-bound form. Interacts with CAMK2D. Interacts with CACNB2; interaction may be involved in beta-adrenergic regulation of heart rate and contractile force. Interaction with CACNB2 regulates the trafficking of CACNA1C to the cell membrane. Phosphorylation at Ser-26, Ser-39, Ser-273 and Ser-301 may be involved in regulating inhibition of voltage-gated L-type Ca(2+) channels.

Its subcellular location is the cell membrane. Functionally, may regulate basal voltage-dependent L-type Ca(2+) currents and be required for beta-adrenergic augmentation of Ca(2+) influx in cardiomyocytes, thereby regulating increases in heart rate and contractile force. May play an important role in cardiac antiarrhythmia via the strong suppression of voltage-dependent L-type Ca(2+) currents. Regulates voltage-gated L-type calcium channel subunit alpha-1C trafficking to the cell membrane. Inhibits cardiac hypertrophy through the calmodulin-dependent kinase II (CaMKII) pathway. Inhibits phosphorylation and activation of CAMK2D. This Mus musculus (Mouse) protein is GTP-binding protein RAD (Rrad).